A 194-amino-acid chain; its full sequence is Fe/S biogenesis protein NfuA (194 aa).

Residues Cys152 and Cys155 each coordinate [4Fe-4S] cluster.

It belongs to the NfuA family. As to quaternary structure, homodimer. It depends on [4Fe-4S] cluster as a cofactor.

Functionally, involved in iron-sulfur cluster biogenesis. Binds a 4Fe-4S cluster, can transfer this cluster to apoproteins, and thereby intervenes in the maturation of Fe/S proteins. Could also act as a scaffold/chaperone for damaged Fe/S proteins. In Pseudomonas aeruginosa (strain LESB58), this protein is Fe/S biogenesis protein NfuA.